A 154-amino-acid chain; its full sequence is Ribonuclease H (154 aa).

Positions 1–142 (MLKHIDLYTD…CDELARDAAS (142 aa)) constitute an RNase H type-1 domain. Residues D10, E48, D70, and D134 each contribute to the Mg(2+) site. A compositionally biased stretch (basic and acidic residues) spans 126-147 (GHPENERCDELARDAASGKELA). The segment at 126 to 154 (GHPENERCDELARDAASGKELAEDTGYQP) is disordered.

The protein belongs to the RNase H family. As to quaternary structure, monomer. The cofactor is Mg(2+).

It localises to the cytoplasm. The catalysed reaction is Endonucleolytic cleavage to 5'-phosphomonoester.. Functionally, endonuclease that specifically degrades the RNA of RNA-DNA hybrids. The sequence is that of Ribonuclease H from Aeromonas salmonicida (strain A449).